We begin with the raw amino-acid sequence, 292 residues long: Protein/nucleic acid deglycase HchA (292 aa).

Over residues 1-12 (MSQDVNELSKQP) the composition is skewed to polar residues. The tract at residues 1–23 (MSQDVNELSKQPTPDKAEDNAFF) is disordered. Cys190 functions as the Nucleophile in the catalytic mechanism.

This sequence belongs to the peptidase C56 family. HchA subfamily.

The protein localises to the cytoplasm. It catalyses the reaction N(omega)-(1-hydroxy-2-oxopropyl)-L-arginyl-[protein] + H2O = lactate + L-arginyl-[protein] + H(+). It carries out the reaction N(6)-(1-hydroxy-2-oxopropyl)-L-lysyl-[protein] + H2O = lactate + L-lysyl-[protein] + H(+). The catalysed reaction is S-(1-hydroxy-2-oxopropyl)-L-cysteinyl-[protein] + H2O = lactate + L-cysteinyl-[protein] + H(+). The enzyme catalyses N(omega)-(1-hydroxy-2-oxoethyl)-L-arginyl-[protein] + H2O = L-arginyl-[protein] + glycolate + H(+). It catalyses the reaction N(6)-(1-hydroxy-2-oxoethyl)-L-lysyl-[protein] + H2O = glycolate + L-lysyl-[protein] + H(+). It carries out the reaction S-(1-hydroxy-2-oxoethyl)-L-cysteinyl-[protein] + H2O = glycolate + L-cysteinyl-[protein] + H(+). The catalysed reaction is N(2)-(1-hydroxy-2-oxopropyl)-dGTP + H2O = lactate + dGTP + H(+). The enzyme catalyses N(2)-(1-hydroxy-2-oxopropyl)-GTP + H2O = lactate + GTP + H(+). It catalyses the reaction N(2)-(1-hydroxy-2-oxopropyl)-GDP + H2O = lactate + GDP + H(+). It carries out the reaction N(2)-(1-hydroxy-2-oxopropyl)-GMP + H2O = lactate + GMP + H(+). The catalysed reaction is N(2)-(1-hydroxy-2-oxoethyl)-dGTP + H2O = dGTP + glycolate + H(+). The enzyme catalyses N(2)-(1-hydroxy-2-oxoethyl)-GTP + H2O = glycolate + GTP + H(+). It catalyses the reaction N(2)-(1-hydroxy-2-oxoethyl)-GDP + H2O = glycolate + GDP + H(+). It carries out the reaction N(2)-(1-hydroxy-2-oxoethyl)-GMP + H2O = glycolate + GMP + H(+). The catalysed reaction is an N(2)-(1-hydroxy-2-oxopropyl)-guanosine in RNA + H2O = a guanosine in RNA + lactate + H(+). The enzyme catalyses an N(2)-(1-hydroxy-2-oxopropyl)-2'-deoxyguanosine in DNA + H2O = a 2'-deoxyguanosine in DNA + lactate + H(+). It catalyses the reaction an N(2)-(1-hydroxy-2-oxoethyl)-guanosine in RNA + H2O = a guanosine in RNA + glycolate + H(+). It carries out the reaction an N(2)-(1-hydroxy-2-oxoethyl)-2'-deoxyguanosine in DNA + H2O = a 2'-deoxyguanosine in DNA + glycolate + H(+). Protein and nucleotide deglycase that catalyzes the deglycation of the Maillard adducts formed between amino groups of proteins or nucleotides and reactive carbonyl groups of glyoxals. Thus, functions as a protein deglycase that repairs methylglyoxal- and glyoxal-glycated proteins, and releases repaired proteins and lactate or glycolate, respectively. Deglycates cysteine, arginine and lysine residues in proteins, and thus reactivates these proteins by reversing glycation by glyoxals. Acts on early glycation intermediates (hemithioacetals and aminocarbinols), preventing the formation of Schiff bases and advanced glycation endproducts (AGE). Also functions as a nucleotide deglycase able to repair glycated guanine in the free nucleotide pool (GTP, GDP, GMP, dGTP) and in DNA and RNA. Is thus involved in a major nucleotide repair system named guanine glycation repair (GG repair), dedicated to reversing methylglyoxal and glyoxal damage via nucleotide sanitization and direct nucleic acid repair. Plays an important role in protecting cells from carbonyl stress. This is Protein/nucleic acid deglycase HchA from Staphylococcus aureus (strain Mu3 / ATCC 700698).